A 98-amino-acid polypeptide reads, in one-letter code: Integration host factor subunit alpha (98 aa).

The interval 49 to 72 (FGNFDLRDKNQRPGRNPKTGEDIP) is disordered.

Belongs to the bacterial histone-like protein family. As to quaternary structure, heterodimer of an alpha and a beta chain.

Its function is as follows. This protein is one of the two subunits of integration host factor, a specific DNA-binding protein that functions in genetic recombination as well as in transcriptional and translational control. The sequence is that of Integration host factor subunit alpha from Shewanella loihica (strain ATCC BAA-1088 / PV-4).